The chain runs to 192 residues: Ion-translocating oxidoreductase complex subunit A (192 aa).

The next 6 membrane-spanning stretches (helical) occupy residues 5–25 (LLLL…FLGL), 39–59 (IGMS…SYLV), 65–85 (LPFD…AVVV), 102–122 (ALGI…VALL), 134–154 (AIFG…FSAM), and 171–191 (AIAM…TGLV).

It belongs to the NqrDE/RnfAE family. The complex is composed of six subunits: RnfA, RnfB, RnfC, RnfD, RnfE and RnfG.

It is found in the cell inner membrane. Its function is as follows. Part of a membrane-bound complex that couples electron transfer with translocation of ions across the membrane. This Shewanella baltica (strain OS223) protein is Ion-translocating oxidoreductase complex subunit A.